Here is a 205-residue protein sequence, read N- to C-terminus: Methylthioribulose-1-phosphate dehydratase (205 aa).

Positions 94 and 96 each coordinate Zn(2+).

It belongs to the aldolase class II family. MtnB subfamily. It depends on Zn(2+) as a cofactor.

The catalysed reaction is 5-(methylsulfanyl)-D-ribulose 1-phosphate = 5-methylsulfanyl-2,3-dioxopentyl phosphate + H2O. Its pathway is amino-acid biosynthesis; L-methionine biosynthesis via salvage pathway; L-methionine from S-methyl-5-thio-alpha-D-ribose 1-phosphate: step 2/6. In terms of biological role, catalyzes the dehydration of methylthioribulose-1-phosphate (MTRu-1-P) into 2,3-diketo-5-methylthiopentyl-1-phosphate (DK-MTP-1-P). The chain is Methylthioribulose-1-phosphate dehydratase from Pectobacterium carotovorum subsp. carotovorum (strain PC1).